A 642-amino-acid chain; its full sequence is MPVVTLPDGSQRQFDHAVSVMDVACDIGPGLAKACIAGRVNGELVDACELIDSDANLAIITSKDDAGLEIIRHSCAHLLGHAIKQLWPDTKMAIGPIIDNGFYYDVDLGRALTQEDIELLEKRMLELAKKDYDVIKKKVNWQEARDTFVARGEDYKVQILDENISRDDRPGLYNHEEYIDMCRGPHVPNMRFCHHFKLQKVAGAYWRGDSNNKMLQRIYGTAWADKKQLNTYLQRLEEAAKRDHRKIGKQLDLYHMQEEAPGMAFWHNDGWTIFRELETFVRTKLKEYQYQEVKGPFMMDRVMWERTGHWENYGEHMFTTSSENREYCVKPMNCPGHIQIFNQGLKSYRDLPLRMAEFGSCHRNEPSGALHGLMRVRGFTQDDAHIFCTEEQIHREVSSCIKMVYDVYSTFGFEKIVVKLSTRPEKRIGTEEQWNQAEESLAAALQENGVQFEYQPGEGAFYGPKIEFTLHDCLDRAWQCGTVQLDFSLPGRLSASYVGENNERKVPVMIHRAVLGSLERFIGILTEEYAGFFPTWIAPQQVVVMNITDSQADYVQELVKKLQDAGIRAKADLRNEKIGFKIREHTLRRVPYMLVCGEKEVESGKVSVRTRRGKDLGSIDVNGFIEKLLIEIRSRNLHQLEE.

Positions 1-61 (MPVVTLPDGS…DSDANLAIIT (61 aa)) constitute a TGS domain. The catalytic stretch occupies residues 243 to 534 (DHRKIGKQLD…LTEEYAGFFP (292 aa)). Cys-334, His-385, and His-511 together coordinate Zn(2+).

This sequence belongs to the class-II aminoacyl-tRNA synthetase family. In terms of assembly, homodimer. Requires Zn(2+) as cofactor.

The protein resides in the cytoplasm. The catalysed reaction is tRNA(Thr) + L-threonine + ATP = L-threonyl-tRNA(Thr) + AMP + diphosphate + H(+). Its function is as follows. Catalyzes the attachment of threonine to tRNA(Thr) in a two-step reaction: L-threonine is first activated by ATP to form Thr-AMP and then transferred to the acceptor end of tRNA(Thr). Also edits incorrectly charged L-seryl-tRNA(Thr). The protein is Threonine--tRNA ligase of Photorhabdus laumondii subsp. laumondii (strain DSM 15139 / CIP 105565 / TT01) (Photorhabdus luminescens subsp. laumondii).